A 570-amino-acid polypeptide reads, in one-letter code: Glutamate--tRNA ligase (570 aa).

The short motif at 107-117 (PNPDFVLHLGS) is the 'HIGH' region element.

The protein belongs to the class-I aminoacyl-tRNA synthetase family. Glutamate--tRNA ligase type 2 subfamily.

The protein resides in the cytoplasm. The catalysed reaction is tRNA(Glu) + L-glutamate + ATP = L-glutamyl-tRNA(Glu) + AMP + diphosphate. Functionally, catalyzes the attachment of glutamate to tRNA(Glu) in a two-step reaction: glutamate is first activated by ATP to form Glu-AMP and then transferred to the acceptor end of tRNA(Glu). The polypeptide is Glutamate--tRNA ligase (Pyrobaculum calidifontis (strain DSM 21063 / JCM 11548 / VA1)).